A 76-amino-acid chain; its full sequence is Putative UPF0377 protein YGL260W (76 aa).

The protein belongs to the UPF0377 family.

The polypeptide is Putative UPF0377 protein YGL260W (Saccharomyces cerevisiae (strain ATCC 204508 / S288c) (Baker's yeast)).